We begin with the raw amino-acid sequence, 241 residues long: Probable 2-phosphosulfolactate phosphatase (241 aa).

This sequence belongs to the ComB family. Mg(2+) serves as cofactor.

The enzyme catalyses (2R)-O-phospho-3-sulfolactate + H2O = (2R)-3-sulfolactate + phosphate. This chain is Probable 2-phosphosulfolactate phosphatase, found in Caldanaerobacter subterraneus subsp. tengcongensis (strain DSM 15242 / JCM 11007 / NBRC 100824 / MB4) (Thermoanaerobacter tengcongensis).